The following is a 291-amino-acid chain: D-alanyl-D-alanine carboxypeptidase DacB2 (291 aa).

An N-terminal signal peptide occupies residues 1–22; that stretch reads MRKLMTATAALCACAVTVSAGA. The Acyl-ester intermediate role is filled by S69. K72 functions as the Proton acceptor in the catalytic mechanism. The active site involves S124.

This sequence belongs to the peptidase S11 family.

It localises to the periplasm. It participates in cell wall biogenesis; peptidoglycan biosynthesis. With respect to regulation, inhibited by the beta-lactam antibiotic meropenem. Inhibited by the non-specific inhibitor phenylmethylsulfonyl fluoride (PMSF). Its function is as follows. Probably cleaves the terminal D-Ala-D-Ala dipeptide of the peptidoglycan stem peptide. Shows significant D,D-carboxypeptidase activity in vitro. Acts on the synthetic penta-peptide substrate Penta-DAP (L-Ala-gamma-D-Gln-DAP-D-Ala-D-Ala). Also shows weak activity on Penta-Lys (L-Ala-gamma-Glu-L-Lys-D-Ala-D-Ala). The catalytic domain binds weakly to peptidoglycan in vitro. Plays an important role in the maintenance of colony morphology and cell wall permeability and integrity. This chain is D-alanyl-D-alanine carboxypeptidase DacB2, found in Mycobacterium tuberculosis (strain ATCC 25618 / H37Rv).